The chain runs to 631 residues: Double-strand-break repair protein rad21 homolog (631 aa).

At S46 the chain carries Phosphoserine. K48 is covalently cross-linked (Glycyl lysine isopeptide (Lys-Gly) (interchain with G-Cter in SUMO2)). The segment at 126 to 282 (DIDVAQQFSL…GGPDSPDSVD (157 aa)) is required for interaction with SMARCA5. At S153 the chain carries Phosphoserine. Residues 154-171 (ILQENDFGDFGMDDREIM) form an interaction with NIPBL region. S175 bears the Phosphoserine mark. K216 participates in a covalent cross-link: Glycyl lysine isopeptide (Lys-Gly) (interchain with G-Cter in SUMO2). S249 is modified (phosphoserine). The disordered stretch occupies residues 258-285 (QPAHDDMDEDDNVSMGGPDSPDSVDPVE). A compositionally biased stretch (low complexity) spans 271-285 (SMGGPDSPDSVDPVE). The interval 287 to 403 (MPTMTDQTTL…TPLVPEDLRK (117 aa)) is interaction with WAPL and PDS5B. An interaction with STAG1 region spans residues 362–403 (MWKETGGVEKLFSLPAQPLWNNRLLKLFTRCLTPLVPEDLRK). The residue at position 394 (T394) is a Phosphothreonine. K418 participates in a covalent cross-link: Glycyl lysine isopeptide (Lys-Gly) (interchain with G-Cter in SUMO2). Basic and acidic residues predominate over residues 423-440 (PEVPREDQQQQHQQRDVI). Disordered stretches follow at residues 423 to 489 (PEVP…EPVM) and 517 to 558 (PELE…RWNK). S454 is subject to Phosphoserine. Residues 522–532 (LPEKEKEKEKE) show a composition bias toward basic and acidic residues. Residues 533 to 551 (KEDDEEEEDEDASGGDQDQ) show a composition bias toward acidic residues. A Phosphoserine modification is found at S545. T623 is subject to Phosphothreonine.

Belongs to the rad21 family. As to quaternary structure, component of the cohesin complex, which consists of an SMC1A/B and SMC3 heterodimer core and 2 non-Smc subunits RAD21 and STAG1/SA1, STAG2/SA2 or STAG3/SA3. Interacts (via C-terminus) with SMC1A and (via N-terminus) with SMC3; these interactions are direct. The cohesin complex interacts with NUMA1. The cohesin complex also interacts with CDCA5, PDS5A and PDS5B; this interaction might regulate the ability of the cohesin complex to mediate sister chromatid cohesion. The interaction with PDS5B is direct and is stimulated by STAG1/SA1. The cohesin complex interacts with the cohesin loading complex subunits NIPBL/Scc2 (via HEAT repeats) and MAU2/Scc4. NIPBL directly contacts all members of the complex, RAD21, SMC1A/B, SMC3 and STAG1. The cohesin complex interacts with DDX11/ChIR1. Directly interacts with WAPL; this interaction is stimulated by STAG1/SA1. Interacts with the ISWI chromatin remodeling complex component SMARCA5/SNF2h; the interaction is direct. Interacts with the NuRD complex component CHD4; the interaction is direct. Post-translationally, cleaved by separase/ESPL1 at the onset of anaphase; this cleavage is required for sister chromatid separation and cytokinesis. Cleaved by caspase-3/CASP3 or caspase-7/CASP7 at the beginning of apoptosis. In terms of processing, phosphorylated; becomes hyperphosphorylated in M phase of cell cycle. The large dissociation of cohesin from chromosome arms during prophase may be partly due to its phosphorylation by PLK1. In terms of tissue distribution, expressed in the gut (at protein level).

The protein resides in the nucleus. It is found in the nucleus matrix. The protein localises to the chromosome. It localises to the centromere. Its subcellular location is the cytoplasm. The protein resides in the cytoskeleton. It is found in the spindle pole. The protein localises to the cytosol. Its function is as follows. As a member of the cohesin complex, involved in sister chromatid cohesion from the time of DNA replication in S phase to their segregation in mitosis, a function that is essential for proper chromosome segregation, post-replicative DNA repair, and the prevention of inappropriate recombination between repetitive regions. The cohesin complex may also play a role in spindle pole assembly during mitosis. In interphase, cohesins may function in the control of gene expression by binding to numerous sites within the genome. May control RUNX1 gene expression. Binds to and represses APOB gene promoter. May play a role in embryonic gut development, possibly through the regulation of enteric neuron development. Functionally, may promote apoptosis. The polypeptide is Double-strand-break repair protein rad21 homolog (RAD21) (Homo sapiens (Human)).